Consider the following 907-residue polypeptide: Clathrin coat assembly protein AP180 (907 aa).

Positions 14-145 constitute an ENTH domain; sequence QYSVTGSAVA…FSYRQMAFDF (132 aa). Disordered stretches follow at residues 285–326, 342–380, 393–414, and 505–525; these read LEGK…DTSP, TSKP…TAWG, SVPS…PTTT, and VPVV…APSP. A phosphoserine mark is found at serine 296, serine 300, and serine 306. Residues 302–324 are compositionally biased toward polar residues; it reads LSKSSPATTVTSPNSTPAKTIDT. Threonine 310 carries an O-linked (GlcNAc) threonine glycan. Phosphoserine is present on serine 313. A Phosphothreonine modification is found at threonine 317. Low complexity predominate over residues 505 to 515; sequence VPVVTPTASTA. Residues 516–525 show a composition bias toward pro residues; sequence PPVPATAPSP. A phosphoserine mark is found at serine 596, serine 602, serine 623, serine 629, and serine 763. Arginine 865 is subject to Asymmetric dimethylarginine; alternate. Omega-N-methylarginine; alternate is present on arginine 865. The disordered stretch occupies residues 867-907; sequence PFGAAAVPGTQLSPSPTPASQSPKKPPAKDPLADLNIKDFL. Basic and acidic residues predominate over residues 893–907; the sequence is PAKDPLADLNIKDFL.

The protein belongs to the PICALM/SNAP91 family. In terms of assembly, binds AP2A2. Interacts with AP2B1; clathrin competes with SNAP91. Post-translationally, thr-310 can be modified by the addition of N-acetylglucosamine which can be further phosphorylated. There is no evidence for direct Thr-310 phosphorylation.

The protein resides in the cell membrane. It is found in the membrane. It localises to the coated pit. In terms of biological role, adaptins are components of the adapter complexes which link clathrin to receptors in coated vesicles. Clathrin-associated protein complexes are believed to interact with the cytoplasmic tails of membrane proteins, leading to their selection and concentration. Binding of AP180 to clathrin triskelia induces their assembly into 60-70 nm coats. This is Clathrin coat assembly protein AP180 (SNAP91) from Homo sapiens (Human).